A 438-amino-acid chain; its full sequence is Serine hydroxymethyltransferase (438 aa).

(6S)-5,6,7,8-tetrahydrofolate is bound by residues Leu-133 and 137–139 (GHL). At Lys-242 the chain carries N6-(pyridoxal phosphate)lysine.

This sequence belongs to the SHMT family. As to quaternary structure, homodimer. Pyridoxal 5'-phosphate serves as cofactor.

The protein resides in the cytoplasm. The enzyme catalyses (6R)-5,10-methylene-5,6,7,8-tetrahydrofolate + glycine + H2O = (6S)-5,6,7,8-tetrahydrofolate + L-serine. It participates in one-carbon metabolism; tetrahydrofolate interconversion. The protein operates within amino-acid biosynthesis; glycine biosynthesis; glycine from L-serine: step 1/1. In terms of biological role, catalyzes the reversible interconversion of serine and glycine with tetrahydrofolate (THF) serving as the one-carbon carrier. This reaction serves as the major source of one-carbon groups required for the biosynthesis of purines, thymidylate, methionine, and other important biomolecules. Also exhibits THF-independent aldolase activity toward beta-hydroxyamino acids, producing glycine and aldehydes, via a retro-aldol mechanism. In Brucella suis (strain ATCC 23445 / NCTC 10510), this protein is Serine hydroxymethyltransferase.